The following is a 474-amino-acid chain: HTH-type transcriptional regulator RamB (474 aa).

Residues 10 to 64 form the HTH cro/C1-type domain; sequence VRQLRNERGFSQAALAQMLEISPSYLNQIEHDVRPLTVAVLLRITEVFGVDATFF. Positions 21–40 form a DNA-binding region, H-T-H motif; the sequence is QAALAQMLEISPSYLNQIEH.

The protein belongs to the short-chain fatty acyl-CoA assimilation regulator (ScfR) family.

Its function is as follows. Involved in the control of the glyoxylate cycle. RamB negatively controls the expression of icl expression during growth on acetate as the sole carbon source. The protein is HTH-type transcriptional regulator RamB of Mycobacterium tuberculosis (strain CDC 1551 / Oshkosh).